Consider the following 993-residue polypeptide: Serine/threonine-protein phosphatase 6 regulatory ankyrin repeat subunit B (993 aa).

ANK repeat units lie at residues 7–36, 40–69, 73–102, 106–135, 139–168, 172–201, 205–234, 238–267, 271–301, 305–334, 338–367, 371–400, 404–433, 437–466, 470–498, 531–561, 566–595, 599–628, 633–662, 669–698, 702–731, 735–764, 771–800, 803–832, 838–867, 871–901, 905–934, and 941–970; these read CEQP…DVNA, EKRT…RVNA, MWLT…DVNA, NWQT…SVNV, GGRT…NINA, KDRR…EVTC, KGYT…EIDE, YGNT…NVNQ, SGFT…DVNI, DGKS…EIDC, DGNT…DTAK, HSMF…EIDT, FGRT…DFHK, CGRT…NVNE, WGRT…DNSE, EGYN…GFEE, ALKS…DLDI, KGRT…SIFV, TKRT…NPEV, KGQT…NVDA, VGCT…SILC, RGRT…SEED, QGYT…FRKF, NPFT…PSIV, KGRT…QVNA, SGKT…DLTV, DLNT…DESL, and ALQT…CVLA. Positions 974–993 are disordered; the sequence is NASRSNGPRSPPGTAVRKEE.

In terms of assembly, protein phosphatase 6 (PP6) holoenzyme is proposed to be a heterotrimeric complex formed by the catalytic subunit, a SAPS domain-containing subunit (PP6R) and an ankyrin repeat-domain containing regulatory subunit (ARS). Interacts with PPP6R1.

Functionally, putative regulatory subunit of protein phosphatase 6 (PP6) that may be involved in the recognition of phosphoprotein substrates. The chain is Serine/threonine-protein phosphatase 6 regulatory ankyrin repeat subunit B (Ankrd44) from Mus musculus (Mouse).